The primary structure comprises 228 residues: Ribose-5-phosphate isomerase A (228 aa).

Residues 27–30 (TGTT), 86–89 (DGAD), and 100–103 (KGGG) contribute to the substrate site. The active-site Proton acceptor is the E109. K127 is a binding site for substrate.

Belongs to the ribose 5-phosphate isomerase family. In terms of assembly, homodimer.

It catalyses the reaction aldehydo-D-ribose 5-phosphate = D-ribulose 5-phosphate. It participates in carbohydrate degradation; pentose phosphate pathway; D-ribose 5-phosphate from D-ribulose 5-phosphate (non-oxidative stage): step 1/1. Its function is as follows. Catalyzes the reversible conversion of ribose-5-phosphate to ribulose 5-phosphate. In Borrelia hermsii (strain HS1 / DAH), this protein is Ribose-5-phosphate isomerase A.